The chain runs to 308 residues: uncharacterized protein (308 aa).

The N-terminal stretch at 1-17 is a signal peptide; it reads MKSLALLLSLLINFSIG. N-linked (GlcNAc...) asparagine glycans are attached at residues Asn-13, Asn-91, Asn-159, and Asn-210. The disordered stretch occupies residues 213-308; sequence DEISGGTGAG…HDNYISSFCT (96 aa). Composition is skewed to gly residues over residues 217 to 231 and 239 to 252; these read GGTG…GSGS and SDGG…GSGS. Residues 267 to 284 are compositionally biased toward low complexity; that stretch reads NKNNNKNKNNNNNNNNYN.

It localises to the secreted. This is an uncharacterized protein from Dictyostelium discoideum (Social amoeba).